The primary structure comprises 73 residues: DNA-directed RNA polymerase subunit omega (73 aa).

This sequence belongs to the RNA polymerase subunit omega family. As to quaternary structure, in cyanobacteria the RNAP catalytic core is composed of 2 alpha, 1 beta, 1 beta', 1 gamma and 1 omega subunit. When a sigma factor is associated with the core the holoenzyme is formed, which can initiate transcription.

The catalysed reaction is RNA(n) + a ribonucleoside 5'-triphosphate = RNA(n+1) + diphosphate. Its function is as follows. Promotes RNA polymerase assembly. Latches the N- and C-terminal regions of the beta' subunit thereby facilitating its interaction with the beta and alpha subunits. In Gloeobacter violaceus (strain ATCC 29082 / PCC 7421), this protein is DNA-directed RNA polymerase subunit omega.